Here is a 546-residue protein sequence, read N- to C-terminus: Thermosome subunit beta (546 aa).

It belongs to the TCP-1 chaperonin family. In terms of assembly, forms a Heterooligomeric complex of two stacked eight-membered rings.

Functionally, molecular chaperone; binds unfolded polypeptides in vitro, and has a weak ATPase activity. The polypeptide is Thermosome subunit beta (thsB) (Thermococcus kodakarensis (strain ATCC BAA-918 / JCM 12380 / KOD1) (Pyrococcus kodakaraensis (strain KOD1))).